Here is a 342-residue protein sequence, read N- to C-terminus: C-X-C chemokine receptor type 6 (342 aa).

Over 1–32 (MAEHDYHEDYGFNSFNDSSQEEHQDFLQFSKV) the chain is Extracellular. A glycan (N-linked (GlcNAc...) asparagine) is linked at Asn-16. Residues 33–59 (FLPCMYLVVFVCGLVGNSLVLVISIFY) traverse the membrane as a helical segment. At 60–68 (HKLQSLTDV) the chain is on the cytoplasmic side. A helical transmembrane segment spans residues 69 to 89 (FLVNLPLADLVFVCTLPFWAY). The Extracellular segment spans residues 90–103 (AGIHEWVFGQVMCK). A disulfide bridge links Cys-102 with Cys-180. Residues 104–125 (SLLGIYTINFYTSMLILTCITV) form a helical membrane-spanning segment. At 126-143 (DRFIVVVKATKAYNQQAK) the chain is on the cytoplasmic side. The helical transmembrane segment at 144-164 (RMTWGKVTSLLIWVISLLVSL) threads the bilayer. The Extracellular portion of the chain corresponds to 165 to 187 (PQIIYGNVFNLDKLICGYHDEAI). A helical membrane pass occupies residues 188–215 (STVVLATQMTLGFFLPLLTMIVCYSVII). Residues 216 to 231 (KTLLHAGGFQKHRSLK) lie on the Cytoplasmic side of the membrane. Residues 232-259 (IIFLVMAVFLLTQMPFNLMKLIRSTHWE) traverse the membrane as a helical segment. Residues 260–275 (YYAMTSFHYTIMVTEA) lie on the Extracellular side of the membrane. Residues 276–293 (IAYLRACLNPVLYAFVSL) form a helical membrane-spanning segment. Topologically, residues 294 to 342 (KFRKNFWKLVKDIGCLPYLGVSHQWKSSEDNSKTFSASHNVEATSMFQL) are cytoplasmic.

This sequence belongs to the G-protein coupled receptor 1 family.

Its subcellular location is the cell membrane. Its function is as follows. Receptor for the C-X-C chemokine CXCL16. Used as a coreceptor by SIVs and by strains of HIV-2 and m-tropic HIV-1. This Pan troglodytes (Chimpanzee) protein is C-X-C chemokine receptor type 6 (CXCR6).